Here is a 318-residue protein sequence, read N- to C-terminus: Acetyl-coenzyme A carboxylase carboxyl transferase subunit alpha (318 aa).

The region spanning 38–292 is the CoA carboxyltransferase C-terminal domain; the sequence is KLEKRLAKLE…NKTITKSLHA (255 aa).

This sequence belongs to the AccA family. As to quaternary structure, acetyl-CoA carboxylase is a heterohexamer composed of biotin carboxyl carrier protein (AccB), biotin carboxylase (AccC) and two subunits each of ACCase subunit alpha (AccA) and ACCase subunit beta (AccD).

Its subcellular location is the cytoplasm. It catalyses the reaction N(6)-carboxybiotinyl-L-lysyl-[protein] + acetyl-CoA = N(6)-biotinyl-L-lysyl-[protein] + malonyl-CoA. The protein operates within lipid metabolism; malonyl-CoA biosynthesis; malonyl-CoA from acetyl-CoA: step 1/1. In terms of biological role, component of the acetyl coenzyme A carboxylase (ACC) complex. First, biotin carboxylase catalyzes the carboxylation of biotin on its carrier protein (BCCP) and then the CO(2) group is transferred by the carboxyltransferase to acetyl-CoA to form malonyl-CoA. The sequence is that of Acetyl-coenzyme A carboxylase carboxyl transferase subunit alpha from Listeria innocua serovar 6a (strain ATCC BAA-680 / CLIP 11262).